Reading from the N-terminus, the 572-residue chain is Pentatricopeptide repeat-containing protein At1g26900, mitochondrial (572 aa).

The transit peptide at 1–117 (MTLAITSRLR…RAFSVFNQLR (117 aa)) directs the protein to the mitochondrion. PPR repeat units follow at residues 89-123 (NLFM…GLTL), 124-158 (DRFS…GFMV), 159-189 (FTDL…MPQS), 191-225 (DAVT…EVVV), 226-260 (NVST…GLDL), 261-291 (DLHL…AIRK), 292-326 (DVVT…KMKP), 327-361 (NSST…RIAL), 362-392 (DAIL…MKDK), 393-427 (DVKS…NCKV), 430-460 (NEIT…MVEA), and 466-496 (KVEH…LPIT). Positions 501–572 (AWRALLAACR…EAGYSAIEIE (72 aa)) are type E motif.

This sequence belongs to the PPR family. PCMP-E subfamily.

It is found in the mitochondrion. This chain is Pentatricopeptide repeat-containing protein At1g26900, mitochondrial (PCMP-E54), found in Arabidopsis thaliana (Mouse-ear cress).